The primary structure comprises 1012 residues: Autotransporter adhesin BpaC (1012 aa).

The N-terminal stretch at 1–71 is a signal peptide; that stretch reads MNRIFKSIWC…PFAEEAMAAN (71 aa). Residues 72–921 are surface exposed passenger domain; it reads NAGVCLTYNG…VGQLNSAVSG (850 aa). 2 disordered regions span residues 420–746 and 785–809; these read GLQG…AGAT and ENST…ESAA. The span at 427–442 shows a compositional bias: polar residues; the sequence is ANTGTASGDNSTASGD. The span at 443–504 shows a compositional bias: low complexity; that stretch reads NATASGTNST…ANGTNSTASG (62 aa). Residues 505–519 are compositionally biased toward polar residues; the sequence is DNSTASGTNASATGE. Residues 520-588 are compositionally biased toward low complexity; sequence NSTATGTDST…ANGTNSTASG (69 aa). Positions 589–603 are enriched in polar residues; it reads DNSTASGTNASATGE. Positions 604–630 are enriched in low complexity; it reads NSTATGTDSTASGSNSTANGTNSTASG. A compositionally biased stretch (polar residues) spans 631-645; the sequence is DNSTASGTNASATGE. Low complexity-rich tracts occupy residues 646–700 and 708–746; these read NSTA…TASG and TNAS…AGAT. The outer membrane translocation of the passenger domain stretch occupies residues 922–959; sequence IRNQMDGMQGQIDTLARDAYSGIAAATALTMIPDVDPG. Positions 960–1012 are translocator domain; that stretch reads KTLAVGIGTANFKGYQASALGATARITQNLKVKTGVSYSGSNYVWGAGMSYQW.

The protein belongs to the autotransporter-2 (AT-2) (TC 1.B.40) family. In terms of assembly, homotrimer.

It is found in the cell surface. Its subcellular location is the cell outer membrane. Involved in virulence. Mediates adherence to human respiratory epithelial cells. This chain is Autotransporter adhesin BpaC, found in Burkholderia mallei (strain ATCC 23344).